The primary structure comprises 277 residues: Inositol monophosphatase 1 (277 aa).

The Mg(2+) site is built by E70, D90, I92, and D93. E70 provides a ligand contact to substrate. A substrate-binding site is contributed by 92–95; sequence IDGT. At T168 the chain carries Phosphothreonine. Residues 194–196, E213, and D220 each bind substrate; that span reads GTA. Mg(2+) is bound at residue D220.

This sequence belongs to the inositol monophosphatase superfamily. Homodimer. The cofactor is Mg(2+). Post-translationally, the N-terminus is blocked.

Its subcellular location is the cytoplasm. The catalysed reaction is a myo-inositol phosphate + H2O = myo-inositol + phosphate. It carries out the reaction 1D-myo-inositol 1-phosphate + H2O = myo-inositol + phosphate. It catalyses the reaction 1D-myo-inositol 2-phosphate + H2O = myo-inositol + phosphate. The enzyme catalyses 1D-myo-inositol 3-phosphate + H2O = myo-inositol + phosphate. The catalysed reaction is 1D-myo-inositol 4-phosphate + H2O = myo-inositol + phosphate. It carries out the reaction 1D-myo-inositol 5-phosphate + H2O = myo-inositol + phosphate. It catalyses the reaction 1D-myo-inositol 6-phosphate + H2O = myo-inositol + phosphate. The enzyme catalyses scyllo-inositol 1-phosphate + H2O = scyllo-inositol + phosphate. The catalysed reaction is alpha-D-galactose 1-phosphate + H2O = D-galactose + phosphate. It carries out the reaction alpha-D-glucose 1-phosphate + H2O = D-glucose + phosphate. It catalyses the reaction D-glucose 6-phosphate + H2O = D-glucose + phosphate. The enzyme catalyses beta-D-fructose 1-phosphate + H2O = D-fructose + phosphate. The catalysed reaction is glycerol 2-phosphate + H2O = glycerol + phosphate. It carries out the reaction adenosine 2'-phosphate + H2O = adenosine + phosphate. It functions in the pathway polyol metabolism; myo-inositol biosynthesis; myo-inositol from D-glucose 6-phosphate: step 2/2. With respect to regulation, activity with myo-inositol monophosphate and D-galactose 1-phosphate is inhibited by Li(+), Ca(2+) and Mn(2+), but also by Mg(2+) at concentrations above 3 mM. Its function is as follows. Phosphatase involved in the dephosphorylation of myo-inositol monophosphate to generate myo-inositol. Is also able to dephosphorylate scyllo-inositol-phosphate, myo-inositol 1,4-diphosphate, scyllo-inositol-1,3-diphosphate and scyllo-inositol-1,4-diphosphate. Also dephosphorylates in vitro other sugar-phosphates including D-galactose-1-phosphate, glucose-1-phosphate, glucose-6-phosphate, fructose-1-phosphate, beta-glycerophosphate and 2'-AMP. Responsible for the provision of inositol required for synthesis of phosphatidylinositol and polyphosphoinositides, and involved in maintaining normal brain function. Has been implicated as the pharmacological target for lithium Li(+) action in brain. Is equally active with myo-inositol monophosphate and D-galactose 1-phosphate. This is Inositol monophosphatase 1 (IMPA1) from Bos taurus (Bovine).